The primary structure comprises 221 residues: Ribonuclease 3 (221 aa).

Residues 1 to 123 form the RNase III domain; that stretch reads MERTGHAFAD…LIAVLYLDGG (123 aa). Position 36 (Glu36) interacts with Mg(2+). Asp40 is an active-site residue. 2 residues coordinate Mg(2+): Asp109 and Glu112. Residue Glu112 is part of the active site. The DRBM domain maps to 148 to 217; sequence DAKTELQEWA…AAALLLREGV (70 aa).

Belongs to the ribonuclease III family. Homodimer. The cofactor is Mg(2+).

Its subcellular location is the cytoplasm. It catalyses the reaction Endonucleolytic cleavage to 5'-phosphomonoester.. In terms of biological role, digests double-stranded RNA. Involved in the processing of primary rRNA transcript to yield the immediate precursors to the large and small rRNAs (23S and 16S). Processes some mRNAs, and tRNAs when they are encoded in the rRNA operon. Processes pre-crRNA and tracrRNA of type II CRISPR loci if present in the organism. This chain is Ribonuclease 3, found in Mesorhizobium japonicum (strain LMG 29417 / CECT 9101 / MAFF 303099) (Mesorhizobium loti (strain MAFF 303099)).